The sequence spans 210 residues: Tetraspanin-31 (210 aa).

Residues 1-12 (MVCGGFACSKNA) are Cytoplasmic-facing. A helical transmembrane segment spans residues 13 to 33 (LCALNVVYMLVGLLLIGVAAW). The Extracellular portion of the chain corresponds to 34-44 (AKGLGLVSSIH). A helical membrane pass occupies residues 45 to 65 (IIGGVIAVGVFLLLIAVAGLV). Residues 66-72 (GAVNHHQ) lie on the Cytoplasmic side of the membrane. Residues 73 to 93 (VLLFFYMIILGLVFIFQFGIS) form a helical membrane-spanning segment. The Extracellular portion of the chain corresponds to 94 to 173 (CSCLAINLSK…FLKHSDEALK (80 aa)). 4 N-linked (GlcNAc...) asparagine glycosylation sites follow: asparagine 100, asparagine 109, asparagine 117, and asparagine 134. Residues 174–194 (ILGGVGLFFSFTEILGVWLAM) form a helical membrane-spanning segment. Residues 195–210 (RFRNQKDPRANPSAFL) lie on the Cytoplasmic side of the membrane.

The protein belongs to the tetraspanin (TM4SF) family.

It is found in the membrane. This chain is Tetraspanin-31 (TSPAN31), found in Bos taurus (Bovine).